A 447-amino-acid chain; its full sequence is Na(+)-translocating NADH-quinone reductase subunit A (447 aa).

Belongs to the NqrA family. In terms of assembly, composed of six subunits; NqrA, NqrB, NqrC, NqrD, NqrE and NqrF.

It carries out the reaction a ubiquinone + n Na(+)(in) + NADH + H(+) = a ubiquinol + n Na(+)(out) + NAD(+). NQR complex catalyzes the reduction of ubiquinone-1 to ubiquinol by two successive reactions, coupled with the transport of Na(+) ions from the cytoplasm to the periplasm. NqrA to NqrE are probably involved in the second step, the conversion of ubisemiquinone to ubiquinol. The protein is Na(+)-translocating NADH-quinone reductase subunit A of Haemophilus influenzae (strain PittGG).